Reading from the N-terminus, the 600-residue chain is Elongation factor 4 (600 aa).

The tr-type G domain maps to Lys-5 to Lys-187. GTP contacts are provided by residues Asp-17–Thr-22 and Asn-134–Asp-137.

The protein belongs to the TRAFAC class translation factor GTPase superfamily. Classic translation factor GTPase family. LepA subfamily.

It is found in the cell inner membrane. The catalysed reaction is GTP + H2O = GDP + phosphate + H(+). Required for accurate and efficient protein synthesis under certain stress conditions. May act as a fidelity factor of the translation reaction, by catalyzing a one-codon backward translocation of tRNAs on improperly translocated ribosomes. Back-translocation proceeds from a post-translocation (POST) complex to a pre-translocation (PRE) complex, thus giving elongation factor G a second chance to translocate the tRNAs correctly. Binds to ribosomes in a GTP-dependent manner. The sequence is that of Elongation factor 4 from Rickettsia felis (strain ATCC VR-1525 / URRWXCal2) (Rickettsia azadi).